Reading from the N-terminus, the 338-residue chain is MIQKNWQELIKPNKLHVEPGADPQRTAIVVAEPLERGFGMTLGNSLRRVLLSSLQGAAVTAIQIDGVLHEFSSIPGVREDVTDIILNIKTLGLRMHGEGPKRMHLRAVGPGEVTAGLIEVGHDIEIMDPELVLCTLDEGAKLNIEFTVETGKGYVPASQNRPEDSPIGLIPIDAIFSPVRKVAYKVENTRVGQVTDYDKLSMTVETNGAVTPDDAVALAARILQDQLQLFINFEEPTAVVEEEKKDELPFNKNLLRKVDELELSVRSANCLKNDNIIYIGDLVQKTEAEMLRTPNFGRKSLNEIKEVLAQMGLHLGMEIANWPPENIEELAKKLEEPY.

The segment at 1-234 (MIQKNWQELI…DQLQLFINFE (234 aa)) is alpha N-terminal domain (alpha-NTD). The interval 250-338 (FNKNLLRKVD…ELAKKLEEPY (89 aa)) is alpha C-terminal domain (alpha-CTD).

The protein belongs to the RNA polymerase alpha chain family. Homodimer. The RNAP catalytic core consists of 2 alpha, 1 beta, 1 beta' and 1 omega subunit. When a sigma factor is associated with the core the holoenzyme is formed, which can initiate transcription.

It carries out the reaction RNA(n) + a ribonucleoside 5'-triphosphate = RNA(n+1) + diphosphate. Functionally, DNA-dependent RNA polymerase catalyzes the transcription of DNA into RNA using the four ribonucleoside triphosphates as substrates. This Paramagnetospirillum magneticum (strain ATCC 700264 / AMB-1) (Magnetospirillum magneticum) protein is DNA-directed RNA polymerase subunit alpha.